The following is a 499-amino-acid chain: Glycerol kinase (499 aa).

T13 lines the ADP pocket. ATP-binding residues include T13, T14, and S15. T13 provides a ligand contact to sn-glycerol 3-phosphate. ADP is bound at residue R17. 4 residues coordinate sn-glycerol 3-phosphate: R83, E84, Y135, and D245. 5 residues coordinate glycerol: R83, E84, Y135, D245, and Q246. ADP is bound by residues T267 and G310. ATP contacts are provided by T267, G310, Q314, and G411. Residues G411 and N415 each contribute to the ADP site.

It belongs to the FGGY kinase family.

The catalysed reaction is glycerol + ATP = sn-glycerol 3-phosphate + ADP + H(+). The protein operates within polyol metabolism; glycerol degradation via glycerol kinase pathway; sn-glycerol 3-phosphate from glycerol: step 1/1. Inhibited by fructose 1,6-bisphosphate (FBP). Functionally, key enzyme in the regulation of glycerol uptake and metabolism. Catalyzes the phosphorylation of glycerol to yield sn-glycerol 3-phosphate. The sequence is that of Glycerol kinase from Xanthomonas axonopodis pv. citri (strain 306).